The primary structure comprises 301 residues: Retinochrome (301 aa).

At 1–17 (MFGNPAMTGLHQFTMWE) the chain is on the extracellular side. The chain crosses the membrane as a helical span at residues 18–43 (HYFTGSIYLVLGCVVFSLCGMCIIFL). Over 44-54 (ARQSPKPRRKY) the chain is Cytoplasmic. Residues 55 to 76 (AILIHVLITAMAVNGGDPAHAS) traverse the membrane as a helical segment. Residues 77 to 94 (SSIVGRWLYGSVGCQLMG) lie on the Extracellular side of the membrane. A helical membrane pass occupies residues 95–120 (FWGFFGGMSHIWMLFAFAMERYMAVC). The Cytoplasmic portion of the chain corresponds to 121 to 132 (HREFYQQMPSVY). A helical membrane pass occupies residues 133–153 (YSIIVGLMYTFGTFWATMPLL). The Extracellular segment spans residues 154-180 (GWASYGLEVHGTSCTINYSVSDESYQS). An N-linked (GlcNAc...) asparagine glycan is attached at Asn-170. The helical transmembrane segment at 181 to 208 (YVFFLAIFSFIFPMVSGWYAISKAWSGL) threads the bilayer. Residues 209-230 (SAIPDAEKEKDKDILSEEQLTA) are Cytoplasmic-facing. The helical transmembrane segment at 231-255 (LAGAFILISLISWSGFGYVAIYSAL) threads the bilayer. Over 256 to 264 (THGGAQLSH) the chain is Extracellular. The chain crosses the membrane as a helical span at residues 265–289 (LRGHVPPIMSKTGCALFPLLIFLLT). Lys-275 carries the N6-(retinylidene)lysine modification. The Cytoplasmic segment spans residues 290-301 (ARSLPKSDTKKP).

This sequence belongs to the G-protein coupled receptor 1 family. Opsin subfamily. In terms of tissue distribution, mainly stored in myeloid bodies of the inner segments.

It is found in the membrane. In terms of biological role, retinochrome is capable of acting as an effective catalyst in the light to convert various isomers of retinal into 11-cis, the form that is required by opsin to resynthesize rhodopsin. This chain is Retinochrome, found in Todarodes pacificus (Japanese flying squid).